The chain runs to 447 residues: uncharacterized protein (447 aa).

[4Fe-4S] cluster contacts are provided by cysteine 87, cysteine 93, cysteine 96, and cysteine 162. Residues glutamine 284, tyrosine 313, glutamate 334, and aspartate 375 each contribute to the S-adenosyl-L-methionine site. Catalysis depends on cysteine 402, which acts as the Nucleophile.

This sequence belongs to the class I-like SAM-binding methyltransferase superfamily. RNA M5U methyltransferase family.

This is an uncharacterized protein from Nanoarchaeum equitans (strain Kin4-M).